We begin with the raw amino-acid sequence, 336 residues long: Transcription initiation factor IIB (336 aa).

A TFIIB-type zinc finger spans residues glutamine 41–methionine 72. Cysteine 45, cysteine 48, cysteine 64, and cysteine 67 together coordinate Zn(2+). 2 repeat units span residues histidine 152–leucine 235 and glutamine 246–lysine 327.

This sequence belongs to the TFIIB family.

Stabilizes TBP binding to an archaeal box-A promoter. Also responsible for recruiting RNA polymerase II to the pre-initiation complex (DNA-TBP-TFIIB). The polypeptide is Transcription initiation factor IIB (Caldivirga maquilingensis (strain ATCC 700844 / DSM 13496 / JCM 10307 / IC-167)).